Here is a 344-residue protein sequence, read N- to C-terminus: MRYHGDMLLTTPVISTLKQNYPDAKIDMLLYQDTIPILSENPEINALYGISNKGAGTFDKIKNVLSLIKTLRANNYDLVINLTDQWMVALLVRCLPARMKISQLYGHRQHGIWKKSFTHLAPIHGTHIVERNLSVLEPLGITDFYTDTTMSYAEDCWKKMRRELDALGVKDHYVVIQPTARQIFKCWDNDKFSKVIDALQQRGYQVVLTCGPSADDLACVDEIARGCETKPITGLAGKTRFPELGALIDHAVLFIGVDSAPGHIAAAVKTPVISLFGATDHVFWRPWTENIIQFWAGNYQKMPTRHELDRNKKYLSVIPAEDVIAATEKLLPEDAPSADRNAQL.

Belongs to the glycosyltransferase 9 family.

It carries out the reaction an L-alpha-D-Hep-(1-&gt;3)-4-O-phospho-L-alpha-D-Hep-(1-&gt;5)-[alpha-Kdo-(2-&gt;4)]-alpha-Kdo-(2-&gt;6)-lipid A + ADP-L-glycero-beta-D-manno-heptose = an L-alpha-D-Hep-(1-&gt;7)-L-alpha-D-Hep-(1-&gt;3)-4-O-phospho-L-alpha-D-Hep-(1-&gt;5)-[alpha-Kdo-(2-&gt;4)]-alpha-Kdo-(2-&gt;6)-lipid A + ADP + H(+). It catalyses the reaction L-alpha-D-Hep-(1-&gt;3)-4-O-phospho-L-alpha-D-Hep-(1-&gt;5)-[alpha-Kdo-(2-&gt;4)]-alpha-Kdo-(2-&gt;6)-lipid A (E. coli) + ADP-L-glycero-beta-D-manno-heptose = L-alpha-D-Hep-(1-&gt;7)-L-alpha-D-Hep-(1-&gt;3)-4-O-phospho-L-alpha-D-Hep-(1-&gt;5)-[alpha-Kdo-(2-&gt;4)]-alpha-Kdo-(2-&gt;6)-lipid A (E. coli) + ADP + H(+). It participates in bacterial outer membrane biogenesis; LPS core biosynthesis. Functionally, glycosyltransferase involved in the biosynthesis of the core oligosaccharide region of lipopolysaccharide (LPS). Catalyzes the addition of the third heptose unit (HepIII) to the second heptose unit (HepII) of the phospho-Hep2-Kdo2-lipid A module. The polypeptide is Lipopolysaccharide heptosyltransferase 3 (Escherichia coli (strain K12)).